The sequence spans 398 residues: MFHPIEEALEALKKGEVIIVVDDEDRENEGDFVALAEHATPEVVNFMATHGRGLICTPLSEDIAGRLDLHPMVDHNTDSHETAFTVSIDHRLTKTGISAQERSFTIQALLNEESVSDDFQRPGHIFPLIAKKGGVLKRAGHTEAAVDLAKACGSQGAGVICEIMNEDGTMARVPELAEIAERHQLKMITIKDLIEYRYNITTLVNREVDITLPTDFGTFRVYGYTNEVDGKEHLAFVMGDVPFNSEPVLVRVHSECLTGDVFASHRCDCGPQLHAALAQIAEEGRGVLLYLRQEGRGIGLINKLKAYRLQEQGYDTVEANEALGFLPDLRNYGIGAQILRDLGVQHMKLLTNNPRKIAGLEGYGLSISERVPLQMEASEHNKQYLQTKMKKLGHLLHF.

Positions methionine 1–asparagine 199 are DHBP synthase. D-ribulose 5-phosphate-binding positions include arginine 26–glutamate 27, aspartate 31, arginine 138–threonine 142, and glutamate 162. Residue glutamate 27 participates in Mg(2+) binding. Histidine 141 provides a ligand contact to Mg(2+). Residues isoleucine 200–phenylalanine 398 are GTP cyclohydrolase II. Arginine 251–glutamate 255 contributes to the GTP binding site. Zn(2+)-binding residues include cysteine 256, cysteine 267, and cysteine 269. Residues glutamine 272, glutamate 294 to arginine 296, and threonine 316 contribute to the GTP site. The Proton acceptor; for GTP cyclohydrolase activity role is filled by aspartate 328. Arginine 330 acts as the Nucleophile; for GTP cyclohydrolase activity in catalysis. GTP contacts are provided by threonine 351 and lysine 356.

It in the N-terminal section; belongs to the DHBP synthase family. In the C-terminal section; belongs to the GTP cyclohydrolase II family. Mg(2+) serves as cofactor. It depends on Mn(2+) as a cofactor. Requires Zn(2+) as cofactor.

It carries out the reaction D-ribulose 5-phosphate = (2S)-2-hydroxy-3-oxobutyl phosphate + formate + H(+). It catalyses the reaction GTP + 4 H2O = 2,5-diamino-6-hydroxy-4-(5-phosphoribosylamino)-pyrimidine + formate + 2 phosphate + 3 H(+). It participates in cofactor biosynthesis; riboflavin biosynthesis; 2-hydroxy-3-oxobutyl phosphate from D-ribulose 5-phosphate: step 1/1. It functions in the pathway cofactor biosynthesis; riboflavin biosynthesis; 5-amino-6-(D-ribitylamino)uracil from GTP: step 1/4. Functionally, catalyzes the conversion of D-ribulose 5-phosphate to formate and 3,4-dihydroxy-2-butanone 4-phosphate. Catalyzes the conversion of GTP to 2,5-diamino-6-ribosylamino-4(3H)-pyrimidinone 5'-phosphate (DARP), formate and pyrophosphate. This is Riboflavin biosynthesis protein RibBA from Bacillus velezensis (strain DSM 23117 / BGSC 10A6 / LMG 26770 / FZB42) (Bacillus amyloliquefaciens subsp. plantarum).